The following is a 355-amino-acid chain: Uroporphyrinogen decarboxylase (355 aa).

Substrate-binding positions include 27–31 (RQAGR), D78, Y155, T210, and H328.

It belongs to the uroporphyrinogen decarboxylase family. As to quaternary structure, homodimer.

Its subcellular location is the cytoplasm. It catalyses the reaction uroporphyrinogen III + 4 H(+) = coproporphyrinogen III + 4 CO2. It functions in the pathway porphyrin-containing compound metabolism; protoporphyrin-IX biosynthesis; coproporphyrinogen-III from 5-aminolevulinate: step 4/4. Catalyzes the decarboxylation of four acetate groups of uroporphyrinogen-III to yield coproporphyrinogen-III. The sequence is that of Uroporphyrinogen decarboxylase from Pseudomonas fluorescens (strain Pf0-1).